The chain runs to 600 residues: Pentatricopeptide repeat-containing protein At3g29230 (600 aa).

13 PPR repeats span residues 50-80, 81-115, 116-150, 151-183, 184-218, 219-245, 246-276, 279-313, 314-348, 349-379, 380-414, 415-445, and 451-481; these read DLHI…VQEP, NVHL…GLFA, DNFT…GLSS, DIYV…MSER, DTVS…DLIS, WNTM…MPER, NTVS…MPLP, NVVT…GLKF, DAAA…NLGS, NAYV…IPKK, DLVS…GIRP, DKVT…MEKV, and QVEH…MPME. A type E motif region spans residues 486–561; the sequence is IWGALLGACR…PSGASSVELE (76 aa). Residues 562–592 form a type E(+) motif region; the sequence is DGIHEFTVFDKSHPKSDQIYQMLGSLIEPPD.

Belongs to the PPR family. PCMP-E subfamily.

In Arabidopsis thaliana (Mouse-ear cress), this protein is Pentatricopeptide repeat-containing protein At3g29230 (PCMP-E27).